A 585-amino-acid chain; its full sequence is Clathrin heavy chain linker domain-containing protein 1 (585 aa).

Positions 118–239 form a coiled coil; sequence QLEAKMRIID…DLRFRHQRLQ (122 aa).

This chain is Clathrin heavy chain linker domain-containing protein 1 (Clhc1), found in Rattus norvegicus (Rat).